The following is a 387-amino-acid chain: Succinate--CoA ligase [ADP-forming] subunit beta (387 aa).

The region spanning 9 to 244 (KQLFAEYGIP…KTQEDETEVL (236 aa)) is the ATP-grasp domain. ATP is bound by residues Lys-46, 53–55 (GRG), Gly-102, and Glu-107. Mg(2+) is bound by residues Asn-199 and Asp-213. Substrate-binding positions include Asn-264 and 321 to 323 (GIV).

The protein belongs to the succinate/malate CoA ligase beta subunit family. As to quaternary structure, heterotetramer of two alpha and two beta subunits. Mg(2+) is required as a cofactor.

The enzyme catalyses succinate + ATP + CoA = succinyl-CoA + ADP + phosphate. It catalyses the reaction GTP + succinate + CoA = succinyl-CoA + GDP + phosphate. Its pathway is carbohydrate metabolism; tricarboxylic acid cycle; succinate from succinyl-CoA (ligase route): step 1/1. Functionally, succinyl-CoA synthetase functions in the citric acid cycle (TCA), coupling the hydrolysis of succinyl-CoA to the synthesis of either ATP or GTP and thus represents the only step of substrate-level phosphorylation in the TCA. The beta subunit provides nucleotide specificity of the enzyme and binds the substrate succinate, while the binding sites for coenzyme A and phosphate are found in the alpha subunit. This is Succinate--CoA ligase [ADP-forming] subunit beta from Xylella fastidiosa (strain M23).